The primary structure comprises 372 residues: Glutamate 5-kinase (372 aa).

ATP is bound at residue Lys14. The substrate site is built by Ser54, Asp141, and Asn153. Position 173–174 (173–174 (TD)) interacts with ATP. One can recognise a PUA domain in the interval 280–358 (RGHVVIDAGA…GEIEIVLGYM (79 aa)).

Belongs to the glutamate 5-kinase family.

It localises to the cytoplasm. It catalyses the reaction L-glutamate + ATP = L-glutamyl 5-phosphate + ADP. It participates in amino-acid biosynthesis; L-proline biosynthesis; L-glutamate 5-semialdehyde from L-glutamate: step 1/2. In terms of biological role, catalyzes the transfer of a phosphate group to glutamate to form L-glutamate 5-phosphate. The chain is Glutamate 5-kinase from Burkholderia orbicola (strain MC0-3).